The chain runs to 374 residues: PqqA peptide cyclase (374 aa).

Positions 7 to 222 (VTPPLWLLAE…VADYRQRMGA (216 aa)) constitute a Radical SAM core domain. [4Fe-4S] cluster-binding residues include cysteine 21, cysteine 25, and cysteine 28.

The protein belongs to the radical SAM superfamily. PqqE family. As to quaternary structure, interacts with PqqD. The interaction is necessary for activity of PqqE. Requires [4Fe-4S] cluster as cofactor.

It carries out the reaction [PQQ precursor protein] + S-adenosyl-L-methionine = E-Y cross-linked-[PQQ precursor protein] + 5'-deoxyadenosine + L-methionine + H(+). It participates in cofactor biosynthesis; pyrroloquinoline quinone biosynthesis. Catalyzes the cross-linking of a glutamate residue and a tyrosine residue in the PqqA protein as part of the biosynthesis of pyrroloquinoline quinone (PQQ). In Kluyvera intermedia (Enterobacter intermedius), this protein is PqqA peptide cyclase.